Consider the following 219-residue polypeptide: Ribosome maturation factor RimP (219 aa).

Residues 195–219 (EGRIPGDDLGAEPEDVASTETQEKK) form a disordered region.

Belongs to the RimP family.

It localises to the cytoplasm. In terms of biological role, required for maturation of 30S ribosomal subunits. This Brucella abortus (strain S19) protein is Ribosome maturation factor RimP.